The primary structure comprises 297 residues: Formylmethanofuran--tetrahydromethanopterin formyltransferase (297 aa).

Belongs to the FTR family. As to quaternary structure, homotetramer.

The protein resides in the cytoplasm. It carries out the reaction N-formylmethanofuran + 5,6,7,8-tetrahydromethanopterin + H(+) = N(5)-formyl-5,6,7,8-tetrahydromethanopterin + methanofuran. It participates in one-carbon metabolism; methanogenesis from CO(2); 5,10-methenyl-5,6,7,8-tetrahydromethanopterin from CO(2): step 2/3. Catalyzes the reversible transfer of a formyl group from formylmethanofuran (formyl-MFR) to tetrahydromethanopterin (H(4)MPT) to produce 5-formyl tetrahydromethanopterin (5-formyl-H(4)MPT) and methanofuran (MFR). In Methanothermobacter thermautotrophicus (strain ATCC 29096 / DSM 1053 / JCM 10044 / NBRC 100330 / Delta H) (Methanobacterium thermoautotrophicum), this protein is Formylmethanofuran--tetrahydromethanopterin formyltransferase.